A 226-amino-acid polypeptide reads, in one-letter code: Phosphoglycolate phosphatase (226 aa).

The active-site Nucleophile is aspartate 12. Aspartate 12, aspartate 14, and aspartate 177 together coordinate Mg(2+).

Belongs to the HAD-like hydrolase superfamily. CbbY/CbbZ/Gph/YieH family. Mg(2+) is required as a cofactor.

The enzyme catalyses 2-phosphoglycolate + H2O = glycolate + phosphate. It functions in the pathway organic acid metabolism; glycolate biosynthesis; glycolate from 2-phosphoglycolate: step 1/1. Its function is as follows. Specifically catalyzes the dephosphorylation of 2-phosphoglycolate. Is involved in the dissimilation of the intracellular 2-phosphoglycolate formed during the DNA repair of 3'-phosphoglycolate ends, a major class of DNA lesions induced by oxidative stress. The chain is Phosphoglycolate phosphatase from Colwellia psychrerythraea (strain 34H / ATCC BAA-681) (Vibrio psychroerythus).